We begin with the raw amino-acid sequence, 166 residues long: Dihydrofolate reductase (166 aa).

The DHFR domain occupies 6–164 (KISLIVAMDK…YDYYFHIYER (159 aa)). 10–12 (IVA) lines the substrate pocket. Residues 11–12 (VA) and 19–24 (IGKDND) each bind NADP(+). Aspartate 32 is a binding site for substrate. Residue 48 to 51 (GRKN) coordinates NADP(+). Arginine 62 contacts substrate. NADP(+) contacts are provided by residues 67–70 (LTRD) and 100–105 (FGGEQI). Threonine 119 contacts substrate.

It belongs to the dihydrofolate reductase family.

The enzyme catalyses (6S)-5,6,7,8-tetrahydrofolate + NADP(+) = 7,8-dihydrofolate + NADPH + H(+). Its pathway is cofactor biosynthesis; tetrahydrofolate biosynthesis; 5,6,7,8-tetrahydrofolate from 7,8-dihydrofolate: step 1/1. Key enzyme in folate metabolism. Catalyzes an essential reaction for de novo glycine and purine synthesis, and for DNA precursor synthesis. The protein is Dihydrofolate reductase (dfrD) of Staphylococcus haemolyticus.